Reading from the N-terminus, the 644-residue chain is SURP and G-patch domain-containing protein 1 (644 aa).

Positions 44 to 54 are enriched in basic and acidic residues; the sequence is REIEARMEQKA. Disordered regions lie at residues 44–74 and 98–122; these read REIEARMEQKARQSHVASPQPPHPGEVADAQ and AQASTDSAPRAPPSSPAPSSLKRPL. Thr-128 bears the Phosphothreonine mark. One copy of the SURP motif 1 repeat lies at 188–230; it reads VIEKLARFVAEGGPELEKVAMEDYKDNPAFTFLHDKNSREFLY. Ser-253 bears the Phosphoserine mark. The stretch at 263 to 306 is one SURP motif 2 repeat; that stretch reads LAEKLARFIADGGPEVETIALQNNRENQAFSFLYDPNSQGYRYY. Disordered regions lie at residues 316–342 and 360–412; these read AKAGSTGSLPAPVPNPSLRRKSAPEAL and PAVN…PSPL. Position 323 is a phosphoserine (Ser-323). Residues 360–369 show a composition bias toward pro residues; it reads PAVNPTPSIP. The Nuclear localization signal motif lies at 379–385; that stretch reads KRKRKSR. 4 positions are modified to phosphoserine: Ser-408, Ser-410, Ser-413, and Ser-484. A G-patch domain is found at 561–608; the sequence is VENIGYQMLMKMGWKEGEGLGTEGQGIKNPVNKGATTIDGAGFGIDRP.

As to quaternary structure, component of the spliceosome.

The protein localises to the nucleus. In terms of biological role, plays a role in pre-mRNA splicing. The polypeptide is SURP and G-patch domain-containing protein 1 (Sugp1) (Rattus norvegicus (Rat)).